The following is a 511-amino-acid chain: Phosphoenolpyruvate carboxylase (511 aa).

The protein belongs to the PEPCase type 2 family. In terms of assembly, homotetramer. The cofactor is Mg(2+).

It carries out the reaction oxaloacetate + phosphate = phosphoenolpyruvate + hydrogencarbonate. Its function is as follows. Catalyzes the irreversible beta-carboxylation of phosphoenolpyruvate (PEP) to form oxaloacetate (OAA), a four-carbon dicarboxylic acid source for the tricarboxylic acid cycle. This is Phosphoenolpyruvate carboxylase from Saccharolobus islandicus (strain L.S.2.15 / Lassen #1) (Sulfolobus islandicus).